The sequence spans 271 residues: Putative phosphoenolpyruvate synthase regulatory protein (271 aa).

152–159 (GVSRCGKT) contacts ADP.

The protein belongs to the pyruvate, phosphate/water dikinase regulatory protein family. PSRP subfamily.

It carries out the reaction [pyruvate, water dikinase] + ADP = [pyruvate, water dikinase]-phosphate + AMP + H(+). The enzyme catalyses [pyruvate, water dikinase]-phosphate + phosphate + H(+) = [pyruvate, water dikinase] + diphosphate. Bifunctional serine/threonine kinase and phosphorylase involved in the regulation of the phosphoenolpyruvate synthase (PEPS) by catalyzing its phosphorylation/dephosphorylation. The sequence is that of Putative phosphoenolpyruvate synthase regulatory protein from Legionella pneumophila (strain Corby).